Consider the following 405-residue polypeptide: L-carnitine CoA-transferase (405 aa).

CoA-binding residues include Lys-97 and Arg-104. The Nucleophile role is filled by Asp-169.

The protein belongs to the CoA-transferase III family. CaiB subfamily. In terms of assembly, homodimer.

It is found in the cytoplasm. The enzyme catalyses crotonobetainyl-CoA + (R)-carnitine = crotonobetaine + (R)-carnitinyl-CoA. The catalysed reaction is 4-(trimethylamino)butanoyl-CoA + (R)-carnitine = (R)-carnitinyl-CoA + 4-(trimethylamino)butanoate. Its pathway is amine and polyamine metabolism; carnitine metabolism. In terms of biological role, catalyzes the reversible transfer of the CoA moiety from gamma-butyrobetainyl-CoA to L-carnitine to generate L-carnitinyl-CoA and gamma-butyrobetaine. Is also able to catalyze the reversible transfer of the CoA moiety from gamma-butyrobetainyl-CoA or L-carnitinyl-CoA to crotonobetaine to generate crotonobetainyl-CoA. The sequence is that of L-carnitine CoA-transferase from Escherichia coli (strain K12 / MC4100 / BW2952).